Reading from the N-terminus, the 311-residue chain is Olfactory receptor 287 (311 aa).

The Extracellular segment spans residues 1–27; it reads MAWSTGQNLSTPGPFILLGFPGPRSMR. An N-linked (GlcNAc...) asparagine glycan is attached at Asn8. The helical transmembrane segment at 28–53 threads the bilayer; that stretch reads IGLFLLFLVMYLLTVVGNLAIISLVG. Residues 54–60 lie on the Cytoplasmic side of the membrane; sequence AHRCLQT. Residues 61 to 82 traverse the membrane as a helical segment; the sequence is PMYFFLCNLSFLEIWFTTACVP. Residues 83–103 lie on the Extracellular side of the membrane; that stretch reads KTLATFAPRGGVISLAGCATQ. A disulfide bond links Cys100 and Cys192. The chain crosses the membrane as a helical span at residues 104–123; that stretch reads MYFVFSLGCTEYFLLAVMAY. Residues 124 to 142 lie on the Cytoplasmic side of the membrane; it reads DRYLAICLPLRYGGIMTPG. The chain crosses the membrane as a helical span at residues 143-161; it reads LAMRLALGSWLCGFSAITV. The Extracellular segment spans residues 162-199; it reads PATLIARLSFCGSRVINHFFCDISPWIVLSCTDTQVVE. The helical transmembrane segment at 200–222 threads the bilayer; sequence LVSFGIAFCVILGSCGITLVSYA. Over 223-239 the chain is Cytoplasmic; that stretch reads YIITTIIKIPSARGRHR. Residues 240–263 form a helical membrane-spanning segment; the sequence is AFSTCSSHLTVVLIWYGSTIFLHV. At 264-275 the chain is on the extracellular side; that stretch reads RTSVESSLDLTK. Residues 276–295 traverse the membrane as a helical segment; it reads AITVLNTIVTPVLNPFIYTL. The Cytoplasmic portion of the chain corresponds to 296–311; the sequence is RNKDVKEALRRTVKGK.

Belongs to the G-protein coupled receptor 1 family. Olfactory epithelium.

It is found in the cell membrane. Functionally, odorant receptor. This Rattus norvegicus (Rat) protein is Olfactory receptor 287 (Olr287).